A 297-amino-acid polypeptide reads, in one-letter code: 4-hydroxy-tetrahydrodipicolinate synthase (297 aa).

T49 serves as a coordination point for pyruvate. The active-site Proton donor/acceptor is the Y137. The active-site Schiff-base intermediate with substrate is the K165. Position 208 (I208) interacts with pyruvate.

The protein belongs to the DapA family. Homotetramer; dimer of dimers.

The protein localises to the cytoplasm. It catalyses the reaction L-aspartate 4-semialdehyde + pyruvate = (2S,4S)-4-hydroxy-2,3,4,5-tetrahydrodipicolinate + H2O + H(+). Its pathway is amino-acid biosynthesis; L-lysine biosynthesis via DAP pathway; (S)-tetrahydrodipicolinate from L-aspartate: step 3/4. Its function is as follows. Catalyzes the condensation of (S)-aspartate-beta-semialdehyde [(S)-ASA] and pyruvate to 4-hydroxy-tetrahydrodipicolinate (HTPA). This is 4-hydroxy-tetrahydrodipicolinate synthase from Gluconacetobacter diazotrophicus (strain ATCC 49037 / DSM 5601 / CCUG 37298 / CIP 103539 / LMG 7603 / PAl5).